The primary structure comprises 594 residues: Probable translation initiation factor IF-2 (594 aa).

Residues 5–224 (YRAPIVVVVG…LMAGLTQRLV (220 aa)) enclose the tr-type G domain. The segment at 14–21 (GHVDVGKT) is G1. 14-21 (GHVDVGKT) is a GTP binding site. The G2 stretch occupies residues 39 to 43 (MITQH). The G3 stretch occupies residues 80 to 83 (DTPG). Residues 80 to 84 (DTPGH) and 134 to 137 (NKVD) contribute to the GTP site. Residues 134–137 (NKVD) form a G4 region. The segment at 202 to 204 (SAV) is G5.

The protein belongs to the TRAFAC class translation factor GTPase superfamily. Classic translation factor GTPase family. IF-2 subfamily.

Function in general translation initiation by promoting the binding of the formylmethionine-tRNA to ribosomes. Seems to function along with eIF-2. The chain is Probable translation initiation factor IF-2 from Caldivirga maquilingensis (strain ATCC 700844 / DSM 13496 / JCM 10307 / IC-167).